The sequence spans 339 residues: tRNA-dihydrouridine(20/20a) synthase (339 aa).

Residues 26-28 (PML) and Q78 contribute to the FMN site. C108 (proton donor) is an active-site residue. Residues K147, H180, 220–222 (NGG), and 242–243 (GR) contribute to the FMN site.

The protein belongs to the Dus family. DusA subfamily. The cofactor is FMN.

It catalyses the reaction 5,6-dihydrouridine(20) in tRNA + NADP(+) = uridine(20) in tRNA + NADPH + H(+). The enzyme catalyses 5,6-dihydrouridine(20) in tRNA + NAD(+) = uridine(20) in tRNA + NADH + H(+). The catalysed reaction is 5,6-dihydrouridine(20a) in tRNA + NADP(+) = uridine(20a) in tRNA + NADPH + H(+). It carries out the reaction 5,6-dihydrouridine(20a) in tRNA + NAD(+) = uridine(20a) in tRNA + NADH + H(+). Its function is as follows. Catalyzes the synthesis of 5,6-dihydrouridine (D), a modified base found in the D-loop of most tRNAs, via the reduction of the C5-C6 double bond in target uridines. Specifically modifies U20 and U20a in tRNAs. The chain is tRNA-dihydrouridine(20/20a) synthase from Shigella flexneri.